The sequence spans 449 residues: Signal recognition particle protein (449 aa).

Residues G109–T116, D191–R195, and S249–D252 each bind GTP.

Belongs to the GTP-binding SRP family. SRP54 subfamily. Part of the signal recognition particle protein translocation system, which is composed of SRP and FtsY. SRP is a ribonucleoprotein composed of Ffh and a 4.5S RNA molecule.

Its subcellular location is the cytoplasm. It carries out the reaction GTP + H2O = GDP + phosphate + H(+). Involved in targeting and insertion of nascent membrane proteins into the cytoplasmic membrane. Binds to the hydrophobic signal sequence of the ribosome-nascent chain (RNC) as it emerges from the ribosomes. The SRP-RNC complex is then targeted to the cytoplasmic membrane where it interacts with the SRP receptor FtsY. Interaction with FtsY leads to the transfer of the RNC complex to the Sec translocase for insertion into the membrane, the hydrolysis of GTP by both Ffh and FtsY, and the dissociation of the SRP-FtsY complex into the individual components. In Rickettsia felis (strain ATCC VR-1525 / URRWXCal2) (Rickettsia azadi), this protein is Signal recognition particle protein.